Here is a 158-residue protein sequence, read N- to C-terminus: Small ribosomal subunit protein uS7 (158 aa).

Belongs to the universal ribosomal protein uS7 family. In terms of assembly, part of the 30S ribosomal subunit. Contacts proteins S9 and S11.

Functionally, one of the primary rRNA binding proteins, it binds directly to 16S rRNA where it nucleates assembly of the head domain of the 30S subunit. Is located at the subunit interface close to the decoding center, probably blocks exit of the E-site tRNA. The polypeptide is Small ribosomal subunit protein uS7 (Leptospira biflexa).